The primary structure comprises 92 residues: Small ribosomal subunit protein uS19 (92 aa).

It belongs to the universal ribosomal protein uS19 family.

Functionally, protein S19 forms a complex with S13 that binds strongly to the 16S ribosomal RNA. This is Small ribosomal subunit protein uS19 (rpsS) from Geobacillus stearothermophilus (Bacillus stearothermophilus).